The following is a 452-amino-acid chain: Scaffold protein ILK (452 aa).

Met1 carries the post-translational modification N-acetylmethionine. 5 ANK repeats span residues 2 to 30, 31 to 63, 64 to 96, 97 to 129, and 130 to 174; these read DDIF…LNQG, DDHG…INVM, NRGD…INAV, NEHG…VSIC, and NKYG…GTTR. An interaction with LIMS1 region spans residues 33-139; it reads HGFSPLHWAC…NKYGEMPVDK (107 aa). Thr173 carries the phosphothreonine modification. The segment at 180–212 is PH-like; mediates interaction with TGFB1I1; the sequence is GTLNKHSGIDFKQLNFLAKLNENHSGELWKGRW. At Ser186 the chain carries Phosphoserine. One can recognise a Protein kinase domain in the interval 193 to 446; it reads LNFLAKLNEN…PKFDMIVPIL (254 aa). ATP-binding residues include Asn200, Asn202, His203, and Ser204. Ser246 carries the phosphoserine modification. The ATP site is built by His270, Met272, and Asn279. Mg(2+) is bound at residue Asp339. Lys341 is an ATP binding site. The Nuclear localization signal signature appears at 363 to 371; it reads KKPEDTNRR. Lys426 is modified (N6-acetyllysine).

It belongs to the protein kinase superfamily. TKL Ser/Thr protein kinase family. As to quaternary structure, component of the heterotrimeric IPP (ILK-PINCH-PARVIN) complex composed of ILK, LIMS1/PINCH and PARVA; the complex binds to F-actin via the C-terminal tail of LIMS1 and the N-terminal region of PARVA, promoting F-actin filament bundling. Formation of the IPP complex is dependent on protein kinase C and precedes integrin-mediated cell adhesion and spreading. ILK also interacts with LIMS2/PINCH2 and with PARVB and PARVG which may substitute for LIMS1 and PARVA in the IPP complex; PARVA and PARVB compete for the same binding site. Interaction with PARVG promotes the establishment of cell polarity required for leukocyte migration. Interacts with the cytoplasmic domain of integrin ITGB1 and may also interact with integrins ITGB2, ITGB3 and/or ITGB5. Interacts probably also with TGFB1I1. Interacts (via ANK repeats) with EPHA1 (via SAM domain); stimulated by EFNA1 but independent of the kinase activity of EPHA1. Interacts with FERMT2. Interacts with LIMD2; leading to activate the protein kinase activity. Interacts with PXN/PAXILLIN (via LD motif 4). Interacts with CCDC25 (via cytoplasmic region); initiating the ILK-PARVB cascade to induce cytoskeleton rearrangement and directional migration of cells. Interacts with IQGAP1; the interaction is required for localization of IQGAP1 to the cell cortex. Post-translationally, phosphorylation by PAK1 modulates ILK subcellular location by promoting its nuclear export. Highly expressed in lung, heart, kidney, liver, brain, spleen and skeletal muscle. Weakly expressed in testis.

It localises to the cell junction. The protein localises to the focal adhesion. Its subcellular location is the cell membrane. The protein resides in the cytoplasm. It is found in the myofibril. It localises to the sarcomere. The protein localises to the cell projection. Its subcellular location is the lamellipodium. The protein resides in the nucleus. It is found in the cytoskeleton. It localises to the microtubule organizing center. The protein localises to the centrosome. Its subcellular location is the cell cortex. Functionally, scaffold protein which mediates protein-protein interactions during a range of cellular events including focal adhesion assembly, cell adhesion and cell migration. Regulates integrin-mediated signal transduction by contributing to inside-out integrin activation. Recruits PARVA and LIMS1/PITCH to form the heterotrimeric IPP (ILK-PINCH-PARVIN) complex which binds to F-actin via the C-terminal tail of LIMS1 and the N-terminal region of PARVA, promoting F-actin filament bundling, a process required to generate force for actin cytoskeleton reorganization and subsequent dynamic cell adhesion events such as cell spreading and migration. Binding to PARVA promotes effective assembly of ILK into focal adhesions while PARVA-bound ILK can simultaneously engage integrin-beta cytoplasmic tails to mediate cell adhesion. Plays a role with PARVG in promoting the cell adhesion and spreading of leukocytes. Acts as an upstream effector of both AKT1/PKB and GSK3. Mediates trafficking of caveolae to the cell surface in an ITGB1-dependent manner by promoting the recruitment of IQGAP1 to the cell cortex which cooperates with its effector DIAPH1 to locally stabilize microtubules and allow stable insertion of caveolae into the plasma membrane. Required for the maintenance of mitotic spindle integrity by promoting phosphorylation of TACC3 by AURKA. Associates with chromatin and may act as a negative regulator of transcription when located in the nucleus. The polypeptide is Scaffold protein ILK (Mus musculus (Mouse)).